Reading from the N-terminus, the 383-residue chain is Putative F-box protein At4g09190 (383 aa).

The region spanning 16–67 (RSQREHIPLDLIVEIVSSLPAKSIVRFRSVSKLWSSIITTPDFTSSVVTRSL) is the F-box domain.

In Arabidopsis thaliana (Mouse-ear cress), this protein is Putative F-box protein At4g09190.